The primary structure comprises 367 residues: Epoxide hydrolase 3 (367 aa).

Residues 22-42 form a helical membrane-spanning segment; the sequence is ALVMSLVYLAALVAAFVYSCI. The Nucleophile role is filled by Asp-180. Tyr-288 functions as the Proton donor in the catalytic mechanism. The active-site Proton acceptor is the His-344.

The protein belongs to the AB hydrolase superfamily. Epoxide hydrolase family. Predominantly expressed in skin, esophagus, lung and tongue and to a lesser extent in pancreas and eye.

Its subcellular location is the microsome membrane. It catalyses the reaction an epoxide + H2O = an ethanediol. The enzyme catalyses 9,10-epoxyoctadecanoate + H2O = 9,10-dihydroxyoctadecanoate. The catalysed reaction is 9,10-epoxy-(12Z)-octadecenoate + H2O = 9,10-dihydroxy-(12Z)-octadecenoate. It carries out the reaction 8,9-epoxy-(5Z,11Z,14Z)-eicosatrienoate + H2O = 8,9-dihydroxy-(5Z,11Z,14Z)-eicosatrienoate. It catalyses the reaction 11,12-epoxy-(5Z,8Z,14Z)-eicosatrienoate + H2O = 11,12-dihydroxy-(5Z,8Z,14Z)-eicosatrienoate. The enzyme catalyses 14,15-epoxy-(5Z,8Z,11Z)-eicosatrienoate + H2O = 14,15-dihydroxy-(5Z,8Z,11Z)-eicosatrienoate. With respect to regulation, inhibited by 1-(1-acetylpiperidin-4-yl)-3-(4-(trifl uoromethoxy)phenyl)urea (TPAU), 1-cyclohexyl-3-dodecylurea (CDU), 12-(3-adamantan-1-yl-ureido)-dodecanoic acid (AUDA), 1-((3S, 5S, 7S)-adamantan-1-yl)-3-(5-(2-(2-ethoxyethoxy) ethoxy)pentyl)urea (AEPU) and to a lesser extent by 8-(3-((3S, 5S, 7S)-adamantan-1-yl)ureido) octanoic acid (AUOA). Catalyzes the hydrolysis of epoxide-containing fatty acids. Active in vitro against epoxyeicosatrienoic acids (EETs) including 8,9-EET, 9,10-EET, 11,12-EET and 14,15-EET and leukotoxin. The protein is Epoxide hydrolase 3 (Ephx3) of Mus musculus (Mouse).